A 289-amino-acid chain; its full sequence is Agmatinase (289 aa).

Residues histidine 112, aspartate 135, histidine 137, aspartate 139, aspartate 216, and aspartate 218 each coordinate Mn(2+).

Belongs to the arginase family. Agmatinase subfamily. Mn(2+) serves as cofactor.

The catalysed reaction is agmatine + H2O = urea + putrescine. It participates in amine and polyamine biosynthesis; putrescine biosynthesis via agmatine pathway; putrescine from agmatine: step 1/1. Its function is as follows. Catalyzes the formation of putrescine from agmatine. This chain is Agmatinase (speB), found in Halalkalibacterium halodurans (strain ATCC BAA-125 / DSM 18197 / FERM 7344 / JCM 9153 / C-125) (Bacillus halodurans).